A 334-amino-acid polypeptide reads, in one-letter code: Glutaredoxin-3 (334 aa).

Ala-2 is modified (N-acetylalanine). A Thioredoxin domain is found at 2–116; sequence AGGAAEAAAA…LTKKVQRHAS (115 aa). Residues 110–131 form a disordered region; that stretch reads KVQRHASSGSFSPSGSEHPKED. Phosphoserine is present on residues Ser-116 and Ser-119. Residues 116–125 show a composition bias toward low complexity; the sequence is SSGSFSPSGS. 2 consecutive Glutaredoxin domains span residues 145–235 and 236–334; these read CMLF…PKLE and ERLK…KGEN. Positions 158 and 260 each coordinate [2Fe-2S] cluster.

Homodimer; the homodimer is independent of 2Fe-2S clusters. Heterotrimer; forms a heterotrimeric complex composed by two BOLA2 molecules and one GLRX3 molecule; linked by [2Fe-2S] clusters. Interacts (via N-terminus) with PRKCQ/PKC-theta. Interacts (via C-terminus) with CSRP3. Interacts with CSRP2.

Its subcellular location is the cytoplasm. It is found in the cytosol. It localises to the cell cortex. The protein localises to the myofibril. The protein resides in the sarcomere. Its subcellular location is the z line. Functionally, together with BOLA2, acts as a cytosolic iron-sulfur (Fe-S) cluster assembly factor that facilitates [2Fe-2S] cluster insertion into a subset of cytosolic proteins. Acts as a critical negative regulator of cardiac hypertrophy and a positive inotropic regulator. Required for hemoglobin maturation. Does not possess any thyoredoxin activity since it lacks the conserved motif that is essential for catalytic activity. This is Glutaredoxin-3 (GLRX3) from Bos taurus (Bovine).